Reading from the N-terminus, the 341-residue chain is Eukaryotic translation initiation factor 3 subunit I (341 aa).

WD repeat units lie at residues 8–49 (GHER…GTYH), 50–91 (GHQG…HTWE), 145–184 (CDES…QLHS), 189–228 (DMGS…VLKT), and 286–325 (GHFG…FDFM).

This sequence belongs to the eIF-3 subunit I family. As to quaternary structure, component of the eukaryotic translation initiation factor 3 (eIF-3) complex.

The protein localises to the cytoplasm. Its function is as follows. Component of the eukaryotic translation initiation factor 3 (eIF-3) complex, which is involved in protein synthesis of a specialized repertoire of mRNAs and, together with other initiation factors, stimulates binding of mRNA and methionyl-tRNAi to the 40S ribosome. The eIF-3 complex specifically targets and initiates translation of a subset of mRNAs involved in cell proliferation. The protein is Eukaryotic translation initiation factor 3 subunit I of Pyricularia oryzae (strain 70-15 / ATCC MYA-4617 / FGSC 8958) (Rice blast fungus).